Consider the following 236-residue polypeptide: 7-cyano-7-deazaguanine synthase (236 aa).

12 to 22 (FSGGQDSTTCL) contacts ATP. Residues cysteine 200, cysteine 215, cysteine 218, and cysteine 221 each coordinate Zn(2+).

Belongs to the QueC family. The cofactor is Zn(2+).

The catalysed reaction is 7-carboxy-7-deazaguanine + NH4(+) + ATP = 7-cyano-7-deazaguanine + ADP + phosphate + H2O + H(+). It participates in purine metabolism; 7-cyano-7-deazaguanine biosynthesis. Its function is as follows. Catalyzes the ATP-dependent conversion of 7-carboxy-7-deazaguanine (CDG) to 7-cyano-7-deazaguanine (preQ(0)). The polypeptide is 7-cyano-7-deazaguanine synthase (Bradyrhizobium sp. (strain ORS 278)).